Here is a 703-residue protein sequence, read N- to C-terminus: Fatty acid oxidation complex subunit alpha (703 aa).

Residues 1-190 (MSEQKAFSLN…KLGVVDACVP (190 aa)) are enoyl-CoA hydratase. The segment at 308–703 (AAVKKVGVLG…TRAGEGRTFY (396 aa)) is 3-hydroxyacyl-CoA dehydrogenase.

The protein in the N-terminal section; belongs to the enoyl-CoA hydratase/isomerase family. This sequence in the central section; belongs to the 3-hydroxyacyl-CoA dehydrogenase family. In terms of assembly, heterotetramer of two alpha chains (FadJ) and two beta chains (FadI).

The protein localises to the cytoplasm. The enzyme catalyses a (3S)-3-hydroxyacyl-CoA = a (2E)-enoyl-CoA + H2O. It catalyses the reaction a 4-saturated-(3S)-3-hydroxyacyl-CoA = a (3E)-enoyl-CoA + H2O. The catalysed reaction is a (3S)-3-hydroxyacyl-CoA + NAD(+) = a 3-oxoacyl-CoA + NADH + H(+). It carries out the reaction (3S)-3-hydroxybutanoyl-CoA = (3R)-3-hydroxybutanoyl-CoA. The protein operates within lipid metabolism; fatty acid beta-oxidation. Its function is as follows. Catalyzes the formation of a hydroxyacyl-CoA by addition of water on enoyl-CoA. Also exhibits 3-hydroxyacyl-CoA epimerase and 3-hydroxyacyl-CoA dehydrogenase activities. The protein is Fatty acid oxidation complex subunit alpha of Vibrio parahaemolyticus serotype O3:K6 (strain RIMD 2210633).